Here is a 645-residue protein sequence, read N- to C-terminus: Iron-regulated surface determinant protein B (645 aa).

The signal sequence occupies residues 1–40 (MNKQQKEFKSFYSIRKSSLGVASVAISTLLLLMSNGEAQA). The YSIRK-G/S signaling motif signature appears at 12–23 (YSIRKSSLGVAS). Residues 38-53 (AQAAAEETGGTNTEAQ) are compositionally biased toward low complexity. Residues 38–113 (AQAAAEETGG…APKETKAVKP (76 aa)) are disordered. The span at 84-110 (KEVEAPTSETKEAKEVKEVKAPKETKA) shows a compositional bias: basic and acidic residues. NEAT domains lie at 144 to 269 (SAPN…KFKT) and 341 to 458 (KMTD…TKAN). Residues Met362 and Tyr440 each contribute to the heme site. 2 stretches are compositionally biased toward basic and acidic residues: residues 458–476 (NTDK…KKEA) and 489–534 (VEKE…KGEV). The segment at 458–619 (NTDKSNKKEQ…LPQTGEESNK (162 aa)) is disordered. Residues 535 to 560 (ESSSTTPTKVVSTTQNVAKPTTASSK) are compositionally biased toward low complexity. Residues 585–615 (NIKNTNDGHTQSQNNKNTQENKAKSLPQTGE) are compositionally biased toward polar residues. The short motif at 610–614 (LPQTG) is the LPXTG sorting signal element. Thr613 is subject to Pentaglycyl murein peptidoglycan amidated threonine. A propeptide spans 614-645 (GEESNKDMTLPLMALLALSSIVAFVLPRKRKN) (removed by sortase).

This sequence belongs to the IsdB family. As to quaternary structure, interacts with host HBA; this interaction allows heme extraction as iron source. Interacts with IsdA.

It localises to the secreted. The protein resides in the cell wall. Its function is as follows. Cell wall-anchored surface receptor that extracts heme from oxidized metHb to enable growth on hemoglobin as a sole iron source. Rapidly extracts heme from hemoglobin and transfers it to IsdA or IsdC, which then relays it to the membrane transporter/IsdEF for internalization. Also promotes resistance to hydrogen peroxide and killing by neutrophils. This is Iron-regulated surface determinant protein B (isdB) from Staphylococcus aureus (strain Mu3 / ATCC 700698).